The sequence spans 66 residues: Small ribosomal subunit protein bS21 (66 aa).

Belongs to the bacterial ribosomal protein bS21 family.

The protein is Small ribosomal subunit protein bS21 of Rickettsia akari (strain Hartford).